The primary structure comprises 251 residues: Carboxy-S-adenosyl-L-methionine synthase (251 aa).

S-adenosyl-L-methionine-binding positions include Y48, 73 to 75 (GCS), N140, and R207.

Belongs to the class I-like SAM-binding methyltransferase superfamily. Cx-SAM synthase family. In terms of assembly, homodimer.

The enzyme catalyses prephenate + S-adenosyl-L-methionine = carboxy-S-adenosyl-L-methionine + 3-phenylpyruvate + H2O. In terms of biological role, catalyzes the conversion of S-adenosyl-L-methionine (SAM) to carboxy-S-adenosyl-L-methionine (Cx-SAM). This Hydrogenovibrio crunogenus (strain DSM 25203 / XCL-2) (Thiomicrospira crunogena) protein is Carboxy-S-adenosyl-L-methionine synthase.